Here is a 735-residue protein sequence, read N- to C-terminus: Probable E3 ubiquitin-protein ligase MID2 (735 aa).

The segment at 30-80 adopts an RING-type zinc-finger fold; it reads CPICLELFEDPLLLPCAHSLCFSCAHRILVSSCSSGESIEPITAFQCPTCR. The B box-type 1; degenerate zinc-finger motif lies at 137–184; sequence IACQFCEQDPPRDAVKTCITCEVSYCDRCLRATHPNKKPFTSHRLVEP. Residues 190 to 232 form a B box-type 2 zinc finger; it reads LRGITCLDHENEKVNMYCVSDDQLICALCKLVGRHRDHQVASL. 4 residues coordinate Zn(2+): Cys-195, His-198, Cys-218, and His-224. Residues 233–301 are a coiled coil; the sequence is NDRFEKLKQT…IIQQRKQMIA (69 aa). Residues 340-399 enclose the COS domain; it reads LKENDQARFLQSAKNIAERVAMATASSQVLIPDINFNDAFENFALDFSREKKLLEGLDYL. A Fibronectin type-III domain is found at 398-531; sequence YLTAPNPPSI…RNSEPTRLKT (134 aa). Positions 516–709 constitute a B30.2/SPRY domain; that stretch reads INQAGSRNSE…ILSGLPAPDF (194 aa).

This sequence belongs to the TRIM/RBCC family. As to quaternary structure, homodimer or heterodimer with MID1. Interacts with IGBP1. Phosphorylated on serine and threonine residues. As to expression, low level in fetal kidney and lung, and in adult prostate, ovary and small intestine.

Its subcellular location is the cytoplasm. It is found in the cytoskeleton. The enzyme catalyses S-ubiquitinyl-[E2 ubiquitin-conjugating enzyme]-L-cysteine + [acceptor protein]-L-lysine = [E2 ubiquitin-conjugating enzyme]-L-cysteine + N(6)-ubiquitinyl-[acceptor protein]-L-lysine.. Its pathway is protein modification; protein ubiquitination. In terms of biological role, E3 ubiquitin ligase that plays a role in microtubule stabilization. Mediates the 'Lys-48'-linked polyubiquitination of LRRK2 to drive its localization to microtubules and its proteasomal degradation in neurons. This ubiquitination inhibits LRRK2 kinase activation by RAB29. In Homo sapiens (Human), this protein is Probable E3 ubiquitin-protein ligase MID2 (MID2).